A 681-amino-acid polypeptide reads, in one-letter code: Peroxisomal acyl-coenzyme A oxidase 2 (681 aa).

Residues 1–28 form a disordered region; the sequence is MGNPGDRVSLGETWSREVHPDIDSERHS. Serine 9 is modified (phosphoserine). Threonine 13 bears the Phosphothreonine mark. Basic and acidic residues predominate over residues 14 to 28; sequence WSREVHPDIDSERHS. Lysine 66, lysine 137, lysine 303, lysine 453, lysine 561, and lysine 667 each carry N6-succinyllysine. A Microbody targeting signal motif is present at residues 679-681; that stretch reads PKL.

The protein belongs to the acyl-CoA oxidase family. In terms of assembly, homodimer. Requires FAD as cofactor. Acetylation of Lys-667 is observed in liver mitochondria from fasted mice but not from fed mice.

It localises to the peroxisome. The enzyme catalyses (25R)-3alpha,7alpha,12alpha-trihydroxy-5beta-cholestan-26-oyl-CoA + A + H2O = (24R,25R)-3alpha,7alpha,12alpha,24-tetrahydroxy-5beta-cholestan-26-oyl-CoA + AH2. It carries out the reaction (25S)-3alpha,7alpha,12alpha-trihydroxy-5beta-cholestan-26-oyl-CoA + O2 = (24E)-3alpha,7alpha,12alpha-trihydroxy-5beta-cholest-24-en-26-oyl-CoA + H2O2. Functionally, oxidizes the CoA esters of the bile acid intermediates di- and tri-hydroxycoprostanic acids. Capable of oxidizing short as well as long chain 2-methyl branched fatty acids. The sequence is that of Peroxisomal acyl-coenzyme A oxidase 2 from Mus musculus (Mouse).